Consider the following 107-residue polypeptide: Small ribosomal subunit protein uS15 (107 aa).

Lys-27 is modified (N6-acetyllysine; alternate). At Lys-27 the chain carries N6-succinyllysine; alternate. A Glycyl lysine isopeptide (Lys-Gly) (interchain with G-Cter in ubiquitin) cross-link involves residue Lys-27. Ser-30 carries the phosphoserine modification. At Lys-34 the chain carries N6-succinyllysine. Tyr-38 carries the phosphotyrosine modification. Lys-43 is covalently cross-linked (Glycyl lysine isopeptide (Lys-Gly) (interchain with G-Cter in SUMO2)).

Belongs to the universal ribosomal protein uS15 family. As to quaternary structure, component of the small ribosomal subunit. Part of the small subunit (SSU) processome, composed of more than 70 proteins and the RNA chaperone small nucleolar RNA (snoRNA) U3. Ubiquitinated at Lys-27 by RNF14 and RNF25 in response to ribosome collisions (ribosome stalling).

The protein resides in the cytoplasm. It is found in the nucleus. The protein localises to the nucleolus. Component of the small ribosomal subunit. The ribosome is a large ribonucleoprotein complex responsible for the synthesis of proteins in the cell. Part of the small subunit (SSU) processome, first precursor of the small eukaryotic ribosomal subunit. During the assembly of the SSU processome in the nucleolus, many ribosome biogenesis factors, an RNA chaperone and ribosomal proteins associate with the nascent pre-rRNA and work in concert to generate RNA folding, modifications, rearrangements and cleavage as well as targeted degradation of pre-ribosomal RNA by the RNA exosome. The protein is Small ribosomal subunit protein uS15 (RPS13) of Sus scrofa (Pig).